The following is a 674-amino-acid chain: E3 ubiquitin ligase Rnf157 (674 aa).

Residues 277–316 (CVVCLSDVRDTLILPCRHLCLCNACADTLRYQASNCPICR) form an RING-type zinc finger. Disordered regions lie at residues 376–404 (LTPSPSAPPLRALGEARRPGGLPSYGSDI) and 433–610 (QNSS…TGRE). The segment covering 469 to 508 (TPESENLTLSSSGAIDQSSCTGTPLSPTISSPEDPLSSSL) has biased composition (polar residues). The segment covering 509–526 (AQSIMSMASSHSQQSQLS) has biased composition (low complexity). The span at 527-537 (TDTVSSMSGSY) shows a compositional bias: polar residues. Over residues 583–604 (EEMDAEGNVTEEEFASPEEDDG) the composition is skewed to acidic residues.

The protein resides in the cytoplasm. The enzyme catalyses S-ubiquitinyl-[E2 ubiquitin-conjugating enzyme]-L-cysteine + [acceptor protein]-L-lysine = [E2 ubiquitin-conjugating enzyme]-L-cysteine + N(6)-ubiquitinyl-[acceptor protein]-L-lysine.. Its function is as follows. E3 ubiquitin ligase that ubiquitinates apbb1 for its degradation by the proteasome and thus prevents apoptosis and promotes survival of neurons. Has a dual role in neurons as it is also required for dendrite growth and maintenance for which its ligase activity is not critical. May act as a scaffold molecule to regulate this process. Acts as a downstream effector of the interconnected PI3K and MAPK signaling pathways and thus participates in the regulation of the cell cycle. The polypeptide is E3 ubiquitin ligase Rnf157 (rnf157) (Xenopus laevis (African clawed frog)).